We begin with the raw amino-acid sequence, 413 residues long: Dolichyl-diphosphooligosaccharide--protein glycosyltransferase 48 kDa subunit (413 aa).

Residues 1 to 383 lie on the Lumenal side of the membrane; sequence GPRSLVLLEN…QYERFIPSAY (383 aa). Residues 384-404 traverse the membrane as a helical segment; it reads PYYAGAFSMMVGLFMFSIVFL. Topologically, residues 405–413 are cytoplasmic; the sequence is HMKEKEKSD.

It belongs to the DDOST 48 kDa subunit family. Component of the oligosaccharyltransferase (OST) complex.

It localises to the endoplasmic reticulum. It is found in the endoplasmic reticulum membrane. The protein operates within protein modification; protein glycosylation. Functionally, subunit of the oligosaccharyl transferase (OST) complex that catalyzes the initial transfer of a defined glycan (Glc(3)Man(9)GlcNAc(2) in eukaryotes) from the lipid carrier dolichol-pyrophosphate to an asparagine residue within an Asn-X-Ser/Thr consensus motif in nascent polypeptide chains, the first step in protein N-glycosylation. N-glycosylation occurs cotranslationally and the complex associates with the Sec61 complex at the channel-forming translocon complex that mediates protein translocation across the endoplasmic reticulum (ER). All subunits are required for a maximal enzyme activity. Required for the assembly of both SST3A- and SS3B-containing OST complexes. The sequence is that of Dolichyl-diphosphooligosaccharide--protein glycosyltransferase 48 kDa subunit from Gallus gallus (Chicken).